The sequence spans 293 residues: 33 kDa chaperonin (293 aa).

Disulfide bonds link cysteine 237–cysteine 239 and cysteine 271–cysteine 274.

It belongs to the HSP33 family. Post-translationally, under oxidizing conditions two disulfide bonds are formed involving the reactive cysteines. Under reducing conditions zinc is bound to the reactive cysteines and the protein is inactive.

It localises to the cytoplasm. Functionally, redox regulated molecular chaperone. Protects both thermally unfolding and oxidatively damaged proteins from irreversible aggregation. Plays an important role in the bacterial defense system toward oxidative stress. The protein is 33 kDa chaperonin of Haemophilus influenzae (strain 86-028NP).